A 277-amino-acid polypeptide reads, in one-letter code: Large ribosomal subunit protein uL2 (277 aa).

2 disordered regions span residues 32 to 58 and 225 to 277; these read KSLTKGKKLKSGRDSSGRISIRRRGGG and VAMN…RRNK. Over residues 258-277 the composition is skewed to basic residues; that stretch reads YKTRKKKRYSDKFIIKRRNK.

This sequence belongs to the universal ribosomal protein uL2 family. In terms of assembly, part of the 50S ribosomal subunit. Forms a bridge to the 30S subunit in the 70S ribosome.

Its function is as follows. One of the primary rRNA binding proteins. Required for association of the 30S and 50S subunits to form the 70S ribosome, for tRNA binding and peptide bond formation. It has been suggested to have peptidyltransferase activity; this is somewhat controversial. Makes several contacts with the 16S rRNA in the 70S ribosome. This is Large ribosomal subunit protein uL2 from Borrelia garinii subsp. bavariensis (strain ATCC BAA-2496 / DSM 23469 / PBi) (Borreliella bavariensis).